A 496-amino-acid chain; its full sequence is ATP synthase subunit beta 1 (496 aa).

Residue 167-174 (GGAGVGKT) coordinates ATP. Residues 474 to 496 (REAAAAQQSTAQQAAPAEKEPAA) are disordered. Positions 476 to 489 (AAAAQQSTAQQAAP) are enriched in low complexity.

It belongs to the ATPase alpha/beta chains family. As to quaternary structure, F-type ATPases have 2 components, CF(1) - the catalytic core - and CF(0) - the membrane proton channel. CF(1) has five subunits: alpha(3), beta(3), gamma(1), delta(1), epsilon(1). CF(0) has three main subunits: a(1), b(2) and c(9-12). The alpha and beta chains form an alternating ring which encloses part of the gamma chain. CF(1) is attached to CF(0) by a central stalk formed by the gamma and epsilon chains, while a peripheral stalk is formed by the delta and b chains.

The protein resides in the cell inner membrane. It catalyses the reaction ATP + H2O + 4 H(+)(in) = ADP + phosphate + 5 H(+)(out). In terms of biological role, produces ATP from ADP in the presence of a proton gradient across the membrane. The catalytic sites are hosted primarily by the beta subunits. The protein is ATP synthase subunit beta 1 of Paraburkholderia xenovorans (strain LB400).